The following is a 264-amino-acid chain: tRNA (guanine-N(1)-)-methyltransferase (264 aa).

Residues glycine 125 and 145–150 (LGDFVL) each bind S-adenosyl-L-methionine.

It belongs to the RNA methyltransferase TrmD family. In terms of assembly, homodimer.

The protein resides in the cytoplasm. The enzyme catalyses guanosine(37) in tRNA + S-adenosyl-L-methionine = N(1)-methylguanosine(37) in tRNA + S-adenosyl-L-homocysteine + H(+). Its function is as follows. Specifically methylates guanosine-37 in various tRNAs. The sequence is that of tRNA (guanine-N(1)-)-methyltransferase from Burkholderia lata (strain ATCC 17760 / DSM 23089 / LMG 22485 / NCIMB 9086 / R18194 / 383).